Consider the following 64-residue polypeptide: Frontoxin IV (64 aa).

5 cysteine pairs are disulfide-bonded: C3/C24, C6/C11, C17/C41, C45/C57, and C58/C63.

As to expression, expressed by the venom gland.

It localises to the secreted. Its function is as follows. Produces peripheral paralysis by blocking neuromuscular transmission at the postsynaptic site. Binds to the muscular nicotinic acetylcholine receptor (nAChR). The chain is Frontoxin IV from Micrurus frontalis (Coral snake).